The primary structure comprises 770 residues: Endothelin-converting enzyme 1 (770 aa).

Residues 1 to 68 (MRGVWPPPVS…WAARTQVEKR (68 aa)) are Cytoplasmic-facing. Position 25 is a phosphothreonine (T25). A helical; Signal-anchor for type II membrane protein transmembrane segment spans residues 69–89 (LVVLVVLLAAGLVACLAALGI). Over 90-770 (QYQTRSPSVC…MNPPHKCEVW (681 aa)) the chain is Extracellular. The 673-residue stretch at 98 to 770 (VCLSEACVSV…MNPPHKCEVW (673 aa)) folds into the Peptidase M13 domain. Cystine bridges form between C99–C104, C122–C755, C130–C715, C185–C435, and C644–C767. N166, N187, N210, N270, N316, N362, N383, and N539 each carry an N-linked (GlcNAc...) asparagine glycan. H607 serves as a coordination point for Zn(2+). E608 is an active-site residue. H611 provides a ligand contact to Zn(2+). Residues N632 and N651 are each glycosylated (N-linked (GlcNAc...) asparagine). E667 provides a ligand contact to Zn(2+). D671 serves as the catalytic Proton donor.

It belongs to the peptidase M13 family. In terms of assembly, homodimer; disulfide-linked. Interacts with PPP1R16B. Interacts with TSPAN8; this interaction recruits the endothelin converting enzyme ECE1 to tetraspanin-enriched microdomains and positively modulates its enzymatic activity. Zn(2+) serves as cofactor. As to expression, all isoforms are expressed in umbilical vein endothelial cells, polynuclear neutrophils, fibroblasts, atrium cardiomyocytes and ventricles. Isoforms A, B and C are also expressed in placenta, lung, heart, adrenal gland and phaeochromocytoma; isoforms A and C in liver, testis and small intestine; isoform B, C and D in endothelial cells and umbilical vein smooth muscle cells; isoforms C and D in saphenous vein cells, and isoform C in kidney.

It localises to the cell membrane. It catalyses the reaction Hydrolysis of the 21-Trp-|-Val-22 bond in big endothelin to form endothelin 1.. With respect to regulation, inhibited by phosphoramidon. Activated by K49-P1-20, a twenty-residue synthetic peptide shortened from the snake B.asper myotoxin II. Functionally, converts big endothelin-1 to endothelin-1. In Homo sapiens (Human), this protein is Endothelin-converting enzyme 1 (ECE1).